The sequence spans 437 residues: Methylenetetrahydrofolate--tRNA-(uracil-5-)-methyltransferase TrmFO (437 aa).

8-13 (GAGLAG) serves as a coordination point for FAD.

Belongs to the MnmG family. TrmFO subfamily. FAD serves as cofactor.

The protein localises to the cytoplasm. The enzyme catalyses uridine(54) in tRNA + (6R)-5,10-methylene-5,6,7,8-tetrahydrofolate + NADH + H(+) = 5-methyluridine(54) in tRNA + (6S)-5,6,7,8-tetrahydrofolate + NAD(+). It catalyses the reaction uridine(54) in tRNA + (6R)-5,10-methylene-5,6,7,8-tetrahydrofolate + NADPH + H(+) = 5-methyluridine(54) in tRNA + (6S)-5,6,7,8-tetrahydrofolate + NADP(+). Functionally, catalyzes the folate-dependent formation of 5-methyl-uridine at position 54 (M-5-U54) in all tRNAs. In Desulfitobacterium hafniense (strain Y51), this protein is Methylenetetrahydrofolate--tRNA-(uracil-5-)-methyltransferase TrmFO.